A 270-amino-acid chain; its full sequence is Glutamate racemase (270 aa).

Residues 14–15 (DS) and 46–47 (YG) each bind substrate. Cysteine 77 functions as the Proton donor/acceptor in the catalytic mechanism. 78–79 (NT) lines the substrate pocket. The Proton donor/acceptor role is filled by cysteine 189. A substrate-binding site is contributed by 190-191 (TH).

The protein belongs to the aspartate/glutamate racemases family.

It catalyses the reaction L-glutamate = D-glutamate. Its pathway is cell wall biogenesis; peptidoglycan biosynthesis. Provides the (R)-glutamate required for cell wall biosynthesis. This Neisseria meningitidis serogroup A / serotype 4A (strain DSM 15465 / Z2491) protein is Glutamate racemase.